A 104-amino-acid chain; its full sequence is Large ribosomal subunit protein uL24 (104 aa).

The protein belongs to the universal ribosomal protein uL24 family. In terms of assembly, part of the 50S ribosomal subunit.

Functionally, one of two assembly initiator proteins, it binds directly to the 5'-end of the 23S rRNA, where it nucleates assembly of the 50S subunit. Its function is as follows. One of the proteins that surrounds the polypeptide exit tunnel on the outside of the subunit. This Yersinia enterocolitica serotype O:8 / biotype 1B (strain NCTC 13174 / 8081) protein is Large ribosomal subunit protein uL24.